Consider the following 222-residue polypeptide: Probable septum site-determining protein MinC (222 aa).

This sequence belongs to the MinC family. Interacts with MinD and FtsZ.

Functionally, cell division inhibitor that blocks the formation of polar Z ring septums. Rapidly oscillates between the poles of the cell to destabilize FtsZ filaments that have formed before they mature into polar Z rings. Prevents FtsZ polymerization. The polypeptide is Probable septum site-determining protein MinC (Lysinibacillus sphaericus (strain C3-41)).